A 280-amino-acid chain; its full sequence is H-2 class II histocompatibility antigen gamma chain (280 aa).

Residues Met-1–Arg-30 are Cytoplasmic-facing. Ser-9 carries the post-translational modification Phosphoserine. A helical; Signal-anchor for type II membrane protein membrane pass occupies residues Gly-31–Tyr-56. Residues Gln-57–Leu-280 lie on the Extracellular side of the membrane. N-linked (GlcNAc...) asparagine glycosylation is found at Asn-114 and Asn-120. The Thyroglobulin type-1 domain occupies Leu-194 to Cys-255. 3 disulfide bridges follow: Cys-197–Cys-216, Cys-227–Cys-234, and Cys-236–Cys-255. Residues His-246–Leu-268 are disordered. Ser-266 carries O-linked (Xyl...) (chondroitin sulfate) serine glycosylation.

Nonamer composed of three alpha/beta/gamma heterotrimers. Interacts with CD44; this complex is essential for the MIF-induced signaling cascade that results in B cell survival. As to quaternary structure, interacts with the mature form of CTSL; the complex survive in neutral pH environment.

Its subcellular location is the late endosome. The protein resides in the lysosome. It is found in the cell membrane. It localises to the endoplasmic reticulum membrane. The protein localises to the golgi apparatus. Its subcellular location is the trans-Golgi network. The protein resides in the endosome. It is found in the secreted. In terms of biological role, plays a critical role in MHC class II antigen processing by stabilizing peptide-free class II alpha/beta heterodimers in a complex soon after their synthesis and directing transport of the complex from the endoplasmic reticulum to compartments where peptide loading of class II takes place. Enhance also the stimulation of T-cell responses through interaction with CD44. Functionally, binds to the peptide-binding site of MHC class II alpha/beta heterodimers forming an alpha-beta-CLIP complex, thereby preventing the loading of antigenic peptides to the MHC class II complex until its release by HLA-DM in the endosome. Stabilizes the conformation of mature CTSL by binding to its active site and serving as a chaperone to help maintain a pool of mature enzyme in endocytic compartments and extracellular space of antigen-presenting cells (APCs). In Rattus norvegicus (Rat), this protein is H-2 class II histocompatibility antigen gamma chain.